The primary structure comprises 78 residues: Acyl carrier protein (78 aa).

The region spanning 2 to 77 (SDTAERIKKI…DAVSYIDEHK (76 aa)) is the Carrier domain. At S37 the chain carries O-(pantetheine 4'-phosphoryl)serine.

Belongs to the acyl carrier protein (ACP) family. Post-translationally, 4'-phosphopantetheine is transferred from CoA to a specific serine of apo-ACP by AcpS. This modification is essential for activity because fatty acids are bound in thioester linkage to the sulfhydryl of the prosthetic group.

Its subcellular location is the cytoplasm. It participates in lipid metabolism; fatty acid biosynthesis. In terms of biological role, carrier of the growing fatty acid chain in fatty acid biosynthesis. The sequence is that of Acyl carrier protein from Zymomonas mobilis subsp. mobilis (strain ATCC 31821 / ZM4 / CP4).